A 553-amino-acid chain; its full sequence is MRLLGSLILTLSLIASAFSSSVPLTLCMSGRAQGTESLNKSGSCEYGAYNGPTGPGTLTATLNEYFYSSGVKCGDCFEVSGPKGKTVVRVVNFCSAGTCPSERPLFMLTPDAFQEISSDPLSVVYDAGFRKVSCDASGPIKAQVSEDSSKYYVKLLIFNNEVGIQSVTIKGKDMSAPVTMVRQGSAQFVWSQAGKEMMFPATVVVSSQYGGSVTMTMNSLSMDILKFSGNFVAPKSSIIKNAPASCSLSASPLAIYQNGLTEGWNYWSSRSYSQINTTDSSSHSVGSTKSLSLVLMGSSSALTLARSGDFETTYFTGIKFNMKANTTMSGLRVYFPNEQNKYWTPSSPITTSWATYTVPFTSLQHKTIESAFTFANTENINVHINIDNIHFIASPSSVTTGYANGNETANSGLATTTVASGGSGASGVATSSHTGVSSSSSTASSTASSTASSIASSTASSSASSTSVSSTTAGGKTTSGGSGISTSGITGSGDSMAASTSKTTSNPTGKTTGMTGSSIDHSESHSSDEHHSSSSIIKASLLLVSAALAFASL.

Positions M1–S19 are cleaved as a signal peptide. A glycan (N-linked (GlcNAc...) asparagine) is linked at N39. An Expansin-like EG45 domain is found at S41–P139. Disulfide bonds link C44–C73 and C76–C134. N-linked (GlcNAc...) asparagine glycans are attached at residues N276, N325, and N406. 2 disordered regions span residues G421–A447 and S460–H531. 2 stretches are compositionally biased toward low complexity: residues S460–K476 and I484–G493. Over residues A497 to G516 the composition is skewed to polar residues. The segment covering D520 to H531 has biased composition (basic and acidic residues).

It belongs to the expansin family. Expansin A subfamily.

It localises to the secreted. In terms of biological role, may serve to lubricate the movement of the cellulose microfibrils during cell growth and wall extension and/or may serve to maintain the fluid state of the slug cell wall. Overexpression shows aberrant stalk formation. The protein is Expansin-like protein 7 (expl7) of Dictyostelium discoideum (Social amoeba).